The following is a 495-amino-acid chain: Thioredoxin reductase SEP1 (495 aa).

Position 37–54 (37–54) interacts with FAD; the sequence is DFVKPSPPGTTWGLGGTC. An intrachain disulfide couples Cys-54 to Cys-59. His-468 (proton acceptor) is an active-site residue. The cysteinyl-selenocysteine (Cys-Sec) cross-link spans 493–494; it reads CU. A non-standard amino acid (selenocysteine) is located at residue Sec-494.

The protein belongs to the class-I pyridine nucleotide-disulfide oxidoreductase family. As to quaternary structure, homodimer. FAD is required as a cofactor. The N-terminus is blocked.

The catalysed reaction is [thioredoxin]-dithiol + NADP(+) = [thioredoxin]-disulfide + NADPH + H(+). Activity was very low in selenium-depleted cells, but increased 4-fold to the same level as in selenium-sufficient cells for 70 hours after the addition of 10 nm selenite. The polypeptide is Thioredoxin reductase SEP1 (SEP1) (Emiliania huxleyi (Coccolithophore)).